The chain runs to 158 residues: Protein SREK1IP1 (158 aa).

2 disordered regions span residues 1–20 (MAAPGPNKDNIRAGCKRCGY) and 45–158 (SSTS…SDTD). The CCHC-type zinc-finger motif lies at 13–30 (AGCKRCGYPGHLTFECRN). The span at 59-79 (ALSKEKIFGSHSKGSQEDSRK) shows a compositional bias: basic and acidic residues. Composition is skewed to basic residues over residues 80–98 (EKHKKKSKERSRGKAKKRS) and 111–140 (KKKKKRKSNKKKGKKEKREKERKHKKKQKK). Low complexity predominate over residues 145–158 (SSSSDSSSESSDTD).

Its function is as follows. Possible splicing regulator involved in the control of cellular survival. This Danio rerio (Zebrafish) protein is Protein SREK1IP1 (srek1ip1).